A 468-amino-acid chain; its full sequence is Mitochondrial distribution and morphology protein 10 (468 aa).

The protein belongs to the MDM10 family. In terms of assembly, component of the ER-mitochondria encounter structure (ERMES) or MDM complex, composed of MMM1, MDM10, MDM12 and MDM34. Associates with the mitochondrial outer membrane sorting assembly machinery SAM(core) complex.

The protein resides in the mitochondrion outer membrane. Its function is as follows. Component of the ERMES/MDM complex, which serves as a molecular tether to connect the endoplasmic reticulum and mitochondria. Components of this complex are involved in the control of mitochondrial shape and protein biogenesis and may function in phospholipid exchange. MDM10 is involved in the late assembly steps of the general translocase of the mitochondrial outer membrane (TOM complex). Functions in the TOM40-specific route of the assembly of outer membrane beta-barrel proteins, including the association of TOM40 with the receptor TOM22 and small TOM proteins. Can associate with the SAM(core) complex as well as the MDM12-MMM1 complex, both involved in late steps of the major beta-barrel assembly pathway, that is responsible for biogenesis of all outer membrane beta-barrel proteins. May act as a switch that shuttles between both complexes and channels precursor proteins into the TOM40-specific pathway. Plays a role in mitochondrial morphology and in the inheritance of mitochondria. This chain is Mitochondrial distribution and morphology protein 10, found in Blastomyces gilchristii (strain SLH14081) (Blastomyces dermatitidis).